We begin with the raw amino-acid sequence, 112 residues long: Nitrogen regulatory protein P-II (112 aa).

Tyr-51 is modified (O-UMP-tyrosine).

Belongs to the P(II) protein family. Homotrimer.

Functionally, in nitrogen-limiting conditions, when the ratio of Gln to 2-ketoglutarate decreases, P-II is uridylylated to P-II-UMP. P-II-UMP allows the deadenylation of glutamine synthetase (GS), thus activating the enzyme. Conversely, in nitrogen excess P-II is deuridylated and promotes the adenylation of GS. P-II indirectly controls the transcription of the GS gene (glnA). P-II prevents NR-II-catalyzed conversion of NR-I to NR-I-phosphate, the transcriptional activator of glnA. When P-II is uridylylated to P-II-UMP, these events are reversed. In Mycobacterium bovis (strain ATCC BAA-935 / AF2122/97), this protein is Nitrogen regulatory protein P-II (glnB).